Reading from the N-terminus, the 434-residue chain is Putative nuclease OPG089 (434 aa).

Asp33, Asp74, Glu168, Asp170, Asp196, and Asp198 together coordinate Mg(2+).

The protein belongs to the XPG/RAD2 endonuclease family. FEN1 subfamily. Mg(2+) serves as cofactor.

The protein resides in the virion. Putative nuclease that seems to be required for double-strand break repair, homologous recombination, and production of full-length viral genomic DNA. In Vaccinia virus (strain Western Reserve) (VACV), this protein is Putative nuclease OPG089 (OPG089).